Consider the following 277-residue polypeptide: NLP effector protein Pc109174 (277 aa).

An N-terminal signal peptide occupies residues 1–19 (MNLVPALVLLLALAQTVLG). Positions 119-125 (KSRHLWA) match the Hepta-peptide GHRHDWE motif motif. An N-linked (GlcNAc...) asparagine glycan is attached at Asn199.

Belongs to the Necrosis inducing protein (NPP1) family.

It localises to the secreted. In terms of biological role, secreted effector that contributes strongly to virulence during infection by P.capsici. Induces cell death in the Solanaceae, including hot pepper. The polypeptide is NLP effector protein Pc109174 (Phytophthora capsici).